A 1303-amino-acid chain; its full sequence is D-lysergyl-peptide-synthetase subunit 2 (1303 aa).

The interval 256 to 653 (EWCRWTPSAV…CRKSTQVKLR (398 aa)) is adenylation (A) domain. The region spanning 793 to 869 (APSNDIEEAF…ELARHTKLVA (77 aa)) is the Carrier domain. Ser830 is modified (O-(pantetheine 4'-phosphoryl)serine). The segment at 905-1294 (EDVYPCTPLQ…HAAPRTLIGD (390 aa)) is condensation (C) domain.

It belongs to the NRP synthetase family.

It functions in the pathway alkaloid biosynthesis; ergot alkaloid biosynthesis. In terms of biological role, D-lysergyl-peptide-synthetase subunit 2; part of the gene cluster that mediates the biosynthesis of fungal ergot alkaloid. DmaW catalyzes the first step of ergot alkaloid biosynthesis by condensing dimethylallyl diphosphate (DMAP) and tryptophan to form 4-dimethylallyl-L-tryptophan. The second step is catalyzed by the methyltransferase easF that methylates 4-dimethylallyl-L-tryptophan in the presence of S-adenosyl-L-methionine, resulting in the formation of 4-dimethylallyl-L-abrine. The catalase easC and the FAD-dependent oxidoreductase easE then transform 4-dimethylallyl-L-abrine to chanoclavine-I which is further oxidized by easD in the presence of NAD(+), resulting in the formation of chanoclavine-I aldehyde. Agroclavine dehydrogenase easG then mediates the conversion of chanoclavine-I aldehyde to agroclavine via a non-enzymatic adduct reaction: the substrate is an iminium intermediate that is formed spontaneously from chanoclavine-I aldehyde in the presence of glutathione. The presence of easA is not required to complete this reaction. Further conversion of agroclavine to paspalic acid is a two-step process involving oxidation of agroclavine to elymoclavine and of elymoclavine to paspalic acid, the second step being performed by the elymoclavine oxidase cloA. Paspalic acid is then further converted to D-lysergic acid. Ergopeptines are assembled from D-lysergic acid and three different amino acids by the D-lysergyl-peptide-synthetases composed each of a monomudular and a trimodular nonribosomal peptide synthetase subunit. LpsB and lpsC encode the monomodular subunits responsible for D-lysergic acid activation and incorporation into the ergopeptine backbone. LpsA1 and A2 subunits encode the trimodular nonribosomal peptide synthetase assembling the tripeptide portion of ergopeptines. LpsA1 is responsible for formation of the major ergopeptine, ergotamine, and lpsA2 for alpha-ergocryptine, the minor ergopeptine of the total alkaloid mixture elaborated by C.purpurea. D-lysergyl-tripeptides are assembled by the nonribosomal peptide synthetases and released as N-(D-lysergyl-aminoacyl)-lactams. Cyclolization of the D-lysergyl-tripeptides is performed by the Fe(2+)/2-ketoglutarate-dependent dioxygenase easH which introduces a hydroxyl group into N-(D-lysergyl-aminoacyl)-lactam at alpha-C of the aminoacyl residue followed by spontaneous condensation with the terminal lactam carbonyl group. The protein is D-lysergyl-peptide-synthetase subunit 2 of Claviceps purpurea (strain 20.1) (Ergot fungus).